Reading from the N-terminus, the 133-residue chain is Fluoride-specific ion channel FluC (133 aa).

The next 4 membrane-spanning stretches (helical) occupy residues 12–32 (LAMT…ASLI), 41–61 (WGTL…LVWL), 76–96 (IVGV…CLVF), and 104–124 (MIGI…VAGA). Residues glycine 81 and threonine 84 each contribute to the Na(+) site.

This sequence belongs to the fluoride channel Fluc/FEX (TC 1.A.43) family.

It is found in the cell inner membrane. It catalyses the reaction fluoride(in) = fluoride(out). With respect to regulation, na(+) is not transported, but it plays an essential structural role and its presence is essential for fluoride channel function. Its function is as follows. Fluoride-specific ion channel. Important for reducing fluoride concentration in the cell, thus reducing its toxicity. This Xanthomonas euvesicatoria pv. vesicatoria (strain 85-10) (Xanthomonas campestris pv. vesicatoria) protein is Fluoride-specific ion channel FluC.